Consider the following 185-residue polypeptide: uncharacterized protein (185 aa).

The next 3 helical transmembrane spans lie at 9 to 29, 72 to 92, and 111 to 131; these read LVAA…WAFL, VLFF…ILIV, and FFFI…IPFL.

Its subcellular location is the cell membrane. This is an uncharacterized protein from Bacillus subtilis (strain 168).